Reading from the N-terminus, the 313-residue chain is PDCD10 and GCKIII kinases-associated protein 1 (313 aa).

Residues 40 to 89 (RLKGTQNSEVEVPRNALHDGSLSNSESRGSTTGLPHQGPLPQEDSEERPC) are disordered. Phosphoserine occurs at positions 60 and 64. Residues 60–73 (SLSNSESRGSTTGL) are compositionally biased toward polar residues. Thr-104 bears the Phosphothreonine mark. Residues Ser-107, Ser-237, and Ser-240 each carry the phosphoserine modification. The disordered stretch occupies residues 253–286 (YFKEEGPTHPTPAADSGSEREDPHTYNGDREGVV). Residues 269-285 (GSEREDPHTYNGDREGV) are compositionally biased toward basic and acidic residues.

In terms of assembly, interacts with KEAP1; this interaction prevents the ubiquitination of KEAP1 by TRIM25, thus protecting KEAP1 from degradation. Found in association with PDCD10 and members of the STE20 kinases, such as STK24, STK25 and STK26.

It is found in the cell membrane. Acts as a tumor suppressor. Acts as a tumor suppressor for colorectal cancer cell proliferation by targeting KEAP1/USP17/ELK1/CDK6 axis. This is PDCD10 and GCKIII kinases-associated protein 1 from Mus musculus (Mouse).